Consider the following 314-residue polypeptide: Citrate/oxoglutarate carrier protein (314 aa).

Solcar repeat units follow at residues 18–100 (VSFS…EAEY), 107–199 (LNNF…VEDG), and 217–301 (EKIG…AKEF). The next 5 helical transmembrane spans lie at 23–44 (ILLGACLNLSEVTTLGQPLEVV), 77–97 (IPWAWIEASTKGAVLLFVSAE), 111–127 (ASGILGGVTGGVTQAYL), 178–198 (VAIRQMTNWGSRFGLSRLVED), and 218–238 (KIGASALGGGLSAWNQPIEVI). Residues 246 to 259 (KEDPNRPKNLTVGK) mediate DNA binding. Residues 273-294 (LYRGVTPRIGLGIWQTVFMVGF) traverse the membrane as a helical segment.

This sequence belongs to the mitochondrial carrier (TC 2.A.29) family.

It is found in the mitochondrion inner membrane. It localises to the mitochondrion matrix. The protein localises to the mitochondrion nucleoid. Its activity is regulated as follows. Strongly inhibited by mersalyl, p-chloromercuribenzenesulfonate, mercuric chloride, N-ethylmaleimide, pyridoxal 5'-phosphate, bathophenanthroline, and tannic acid. Partially inhibited by alpha-cyanocinnamate and bromescol purple. Weakly inhibited by butylmalonate and phenylsuccinate. Not inhibited by 1,2,3-benzenetricarboxylate or carboxyatractyloside. In terms of biological role, mitochondrial antiporter which catalyzes the transport of citrate and oxoglutarate across the membrane. Also shows specificity for oxaloacetate, and to a lesser extent succinate and fumarate. Transports isocitrate, cis-aconitate and L-malate with very low efficiency. Does not show uniporter activity. Helps to maintain normal citrate levels and NADPH/NADP(+) ratios under conditions of oxidative stress. In addition, associates with the mitochondrial nucleoid and binds DNA in vitro, although the relevance of these data in vivo is unclear. The protein is Citrate/oxoglutarate carrier protein (YHM2) of Saccharomyces cerevisiae (strain ATCC 204508 / S288c) (Baker's yeast).